The chain runs to 357 residues: Histidinol-phosphate aminotransferase (357 aa).

Residue lysine 212 is modified to N6-(pyridoxal phosphate)lysine.

The protein belongs to the class-II pyridoxal-phosphate-dependent aminotransferase family. Histidinol-phosphate aminotransferase subfamily. Homodimer. The cofactor is pyridoxal 5'-phosphate.

It catalyses the reaction L-histidinol phosphate + 2-oxoglutarate = 3-(imidazol-4-yl)-2-oxopropyl phosphate + L-glutamate. It participates in amino-acid biosynthesis; L-histidine biosynthesis; L-histidine from 5-phospho-alpha-D-ribose 1-diphosphate: step 7/9. The protein is Histidinol-phosphate aminotransferase of Pectobacterium atrosepticum (strain SCRI 1043 / ATCC BAA-672) (Erwinia carotovora subsp. atroseptica).